Here is a 570-residue protein sequence, read N- to C-terminus: Spermatocyte protein spe-26 (570 aa).

6 Kelch repeats span residues 244 to 291 (VLII…IVDG), 293 to 338 (LYLF…SVVY), 341 to 393 (RIYV…VFEN), 395 to 440 (IYVS…NHGN), 442 to 487 (LLIV…SYKG), and 489 to 535 (LFSV…VAPN).

In terms of tissue distribution, testis, in both spermatogonial cells and spermatocytes.

It is found in the cytoplasm. Its subcellular location is the cytoskeleton. In terms of biological role, may play a role in the spermatocyte cytoskeleton, possibly interacting with actin. The polypeptide is Spermatocyte protein spe-26 (spe-26) (Caenorhabditis elegans).